The primary structure comprises 343 residues: Biotin synthase 2 (343 aa).

A Radical SAM core domain is found at 58-285; it reads NEVQLSTLLS…LTMVRLSAGR (228 aa). Positions 73, 77, and 80 each coordinate [4Fe-4S] cluster. [2Fe-2S] cluster-binding residues include Cys-117, Cys-148, Cys-208, and Arg-280.

Belongs to the radical SAM superfamily. Biotin synthase family. Homodimer. Requires [4Fe-4S] cluster as cofactor. [2Fe-2S] cluster serves as cofactor.

The enzyme catalyses (4R,5S)-dethiobiotin + (sulfur carrier)-SH + 2 reduced [2Fe-2S]-[ferredoxin] + 2 S-adenosyl-L-methionine = (sulfur carrier)-H + biotin + 2 5'-deoxyadenosine + 2 L-methionine + 2 oxidized [2Fe-2S]-[ferredoxin]. It participates in cofactor biosynthesis; biotin biosynthesis; biotin from 7,8-diaminononanoate: step 2/2. Functionally, catalyzes the conversion of dethiobiotin (DTB) to biotin by the insertion of a sulfur atom into dethiobiotin via a radical-based mechanism. This Polaromonas sp. (strain JS666 / ATCC BAA-500) protein is Biotin synthase 2.